Reading from the N-terminus, the 220-residue chain is Deoxyribose-phosphate aldolase (220 aa).

Catalysis depends on aspartate 89, which acts as the Proton donor/acceptor. The Schiff-base intermediate with acetaldehyde role is filled by lysine 151. The Proton donor/acceptor role is filled by lysine 180.

The protein belongs to the DeoC/FbaB aldolase family. DeoC type 1 subfamily.

The protein localises to the cytoplasm. The enzyme catalyses 2-deoxy-D-ribose 5-phosphate = D-glyceraldehyde 3-phosphate + acetaldehyde. Its pathway is carbohydrate degradation; 2-deoxy-D-ribose 1-phosphate degradation; D-glyceraldehyde 3-phosphate and acetaldehyde from 2-deoxy-alpha-D-ribose 1-phosphate: step 2/2. Its function is as follows. Catalyzes a reversible aldol reaction between acetaldehyde and D-glyceraldehyde 3-phosphate to generate 2-deoxy-D-ribose 5-phosphate. The protein is Deoxyribose-phosphate aldolase of Staphylococcus epidermidis (strain ATCC 35984 / DSM 28319 / BCRC 17069 / CCUG 31568 / BM 3577 / RP62A).